Reading from the N-terminus, the 343-residue chain is Sodium/bile acid cotransporter 7-A (343 aa).

Over 1–10 the chain is Cytoplasmic; sequence MGLLERLRKE. A helical transmembrane segment spans residues 11–31; sequence WFIVGIILVIAAAKLEPTVGV. Over 32 to 37 the chain is Extracellular; sequence KGGPLK. The helical transmembrane segment at 38-58 threads the bilayer; it reads PEITITYIAVSAIFFNSGLSL. Over 59–71 the chain is Cytoplasmic; it reads KTEELTNALMHVK. Residues 72–92 traverse the membrane as a helical segment; that stretch reads LHLFVQLFTLVFFPTAIWLFL. Over 93–116 the chain is Extracellular; sequence QVLSLTPINEWLLKGLQTVSCMPP. The chain crosses the membrane as a helical span at residues 117-137; that stretch reads PVSSAVILTKAVGGNEAAAIF. A topological domain (cytoplasmic) is located at residue Asn138. Residues 139–159 form a helical membrane-spanning segment; it reads SAFGSFLGIVVTPLLLLLFLG. The Extracellular segment spans residues 160-163; that stretch reads SSSS. Residues 164 to 184 form a helical membrane-spanning segment; it reads VPFTSIFSQLFMTVVVPLIIG. At 185–201 the chain is on the cytoplasmic side; that stretch reads QIVRRYIKDWLERKKPP. The chain crosses the membrane as a helical span at residues 202-222; that stretch reads FGAISSCVLLMIIYTTFCDTF. At 223–234 the chain is on the extracellular side; sequence SNPNIDLDTFSL. A helical transmembrane segment spans residues 235 to 255; the sequence is VVIVFIIFFIQLAFMLLTFLF. At 256–270 the chain is on the cytoplasmic side; sequence STSKNSGFTPADTVA. Residues 271-291 form a helical membrane-spanning segment; it reads IVFCSTHKSLTLGIPMLKIVF. Residues 292–298 are Extracellular-facing; that stretch reads VGYEHLS. The chain crosses the membrane as a helical span at residues 299 to 319; sequence LISVPLLIYHPAQILLGSVLV. The Cytoplasmic portion of the chain corresponds to 320-343; that stretch reads PTIKSWMLSRQKALKLTRQPKIPL.

This sequence belongs to the bile acid:sodium symporter (BASS) (TC 2.A.28) family. Strongly expressed in small intestine. Moderately expressed in spleen. Weakly expressed in skeletal muscle. Not detected in other tissues tested.

Its subcellular location is the cell membrane. It is found in the endoplasmic reticulum membrane. The protein localises to the golgi apparatus membrane. Its function is as follows. Involved in teeth and skeletal development. Has an essential role in the biosynthesis and trafficking of glycosaminoglycans and glycoproteins to produce a proper functioning extracellular matrix. Required for extracellular matrix mineralization. Also involved in the regulation of cellular calcium homeostasis. Does not show transport activity towards bile acids or steroid sulfates. The chain is Sodium/bile acid cotransporter 7-A (slc10a7-a) from Xenopus laevis (African clawed frog).